A 305-amino-acid chain; its full sequence is Ornithine carbamoyltransferase (305 aa).

Residues 48-51 (STRT), Arg-99, and 126-129 (HPCQ) contribute to the carbamoyl phosphate site. L-ornithine is bound by residues Asn-157, Asp-222, and 226 to 227 (SM). Residues 262 to 263 (CL) and Arg-290 contribute to the carbamoyl phosphate site.

It belongs to the aspartate/ornithine carbamoyltransferase superfamily. OTCase family.

The protein resides in the cytoplasm. It catalyses the reaction carbamoyl phosphate + L-ornithine = L-citrulline + phosphate + H(+). It functions in the pathway amino-acid biosynthesis; L-arginine biosynthesis; L-arginine from L-ornithine and carbamoyl phosphate: step 1/3. Its function is as follows. Reversibly catalyzes the transfer of the carbamoyl group from carbamoyl phosphate (CP) to the N(epsilon) atom of ornithine (ORN) to produce L-citrulline. This is Ornithine carbamoyltransferase (argF) from Methanocaldococcus jannaschii (strain ATCC 43067 / DSM 2661 / JAL-1 / JCM 10045 / NBRC 100440) (Methanococcus jannaschii).